The primary structure comprises 344 residues: N-acetyl-gamma-glutamyl-phosphate reductase (344 aa).

Cysteine 149 is an active-site residue.

This sequence belongs to the NAGSA dehydrogenase family. Type 1 subfamily.

The protein resides in the cytoplasm. The enzyme catalyses N-acetyl-L-glutamate 5-semialdehyde + phosphate + NADP(+) = N-acetyl-L-glutamyl 5-phosphate + NADPH + H(+). The protein operates within amino-acid biosynthesis; L-arginine biosynthesis; N(2)-acetyl-L-ornithine from L-glutamate: step 3/4. Functionally, catalyzes the NADPH-dependent reduction of N-acetyl-5-glutamyl phosphate to yield N-acetyl-L-glutamate 5-semialdehyde. This chain is N-acetyl-gamma-glutamyl-phosphate reductase, found in Acidithiobacillus ferrooxidans (strain ATCC 23270 / DSM 14882 / CIP 104768 / NCIMB 8455) (Ferrobacillus ferrooxidans (strain ATCC 23270)).